The primary structure comprises 258 residues: Imidazole glycerol phosphate synthase subunit HisF (258 aa).

Catalysis depends on residues D11 and D130.

The protein belongs to the HisA/HisF family. As to quaternary structure, heterodimer of HisH and HisF.

Its subcellular location is the cytoplasm. The catalysed reaction is 5-[(5-phospho-1-deoxy-D-ribulos-1-ylimino)methylamino]-1-(5-phospho-beta-D-ribosyl)imidazole-4-carboxamide + L-glutamine = D-erythro-1-(imidazol-4-yl)glycerol 3-phosphate + 5-amino-1-(5-phospho-beta-D-ribosyl)imidazole-4-carboxamide + L-glutamate + H(+). It functions in the pathway amino-acid biosynthesis; L-histidine biosynthesis; L-histidine from 5-phospho-alpha-D-ribose 1-diphosphate: step 5/9. Its function is as follows. IGPS catalyzes the conversion of PRFAR and glutamine to IGP, AICAR and glutamate. The HisF subunit catalyzes the cyclization activity that produces IGP and AICAR from PRFAR using the ammonia provided by the HisH subunit. The sequence is that of Imidazole glycerol phosphate synthase subunit HisF from Yersinia pseudotuberculosis serotype O:3 (strain YPIII).